The primary structure comprises 204 residues: Holliday junction branch migration complex subunit RuvA (204 aa).

Positions 1-67 (MIGYLEGKIL…QPKPVLIGFN (67 aa)) are domain I. The segment at 68–145 (SLEEREFFER…VFAGEHGGEP (78 aa)) is domain II. The segment at 146–156 (AGPAPVEENFH) is flexible linker. The interval 156 to 204 (HLLVLDVLVNQLGHKAAEAKELINQAIKRNPAISSPEELFDEVYRGETG) is domain III.

The protein belongs to the RuvA family. Homotetramer. Forms an RuvA(8)-RuvB(12)-Holliday junction (HJ) complex. HJ DNA is sandwiched between 2 RuvA tetramers; dsDNA enters through RuvA and exits via RuvB. An RuvB hexamer assembles on each DNA strand where it exits the tetramer. Each RuvB hexamer is contacted by two RuvA subunits (via domain III) on 2 adjacent RuvB subunits; this complex drives branch migration. In the full resolvosome a probable DNA-RuvA(4)-RuvB(12)-RuvC(2) complex forms which resolves the HJ.

The protein localises to the cytoplasm. Its function is as follows. The RuvA-RuvB-RuvC complex processes Holliday junction (HJ) DNA during genetic recombination and DNA repair, while the RuvA-RuvB complex plays an important role in the rescue of blocked DNA replication forks via replication fork reversal (RFR). RuvA specifically binds to HJ cruciform DNA, conferring on it an open structure. The RuvB hexamer acts as an ATP-dependent pump, pulling dsDNA into and through the RuvAB complex. HJ branch migration allows RuvC to scan DNA until it finds its consensus sequence, where it cleaves and resolves the cruciform DNA. This chain is Holliday junction branch migration complex subunit RuvA, found in Desulfatibacillum aliphaticivorans.